We begin with the raw amino-acid sequence, 301 residues long: tRNA dimethylallyltransferase 1 (301 aa).

Residue 11–18 (GPTGVGKT) participates in ATP binding. 13 to 18 (TGVGKT) serves as a coordination point for substrate. Residues 36–39 (DSRQ) are interaction with substrate tRNA.

The protein belongs to the IPP transferase family. In terms of assembly, monomer. The cofactor is Mg(2+).

It catalyses the reaction adenosine(37) in tRNA + dimethylallyl diphosphate = N(6)-dimethylallyladenosine(37) in tRNA + diphosphate. Catalyzes the transfer of a dimethylallyl group onto the adenine at position 37 in tRNAs that read codons beginning with uridine, leading to the formation of N6-(dimethylallyl)adenosine (i(6)A). In Bacteroides fragilis (strain YCH46), this protein is tRNA dimethylallyltransferase 1.